We begin with the raw amino-acid sequence, 110 residues long: UPF0122 protein Aflv_1766 (110 aa).

It belongs to the UPF0122 family.

In terms of biological role, might take part in the signal recognition particle (SRP) pathway. This is inferred from the conservation of its genetic proximity to ftsY/ffh. May be a regulatory protein. This Anoxybacillus flavithermus (strain DSM 21510 / WK1) protein is UPF0122 protein Aflv_1766.